Reading from the N-terminus, the 103-residue chain is uncharacterized protein (103 aa).

The next 3 membrane-spanning stretches (helical) occupy residues 12–34 (GFSWGIALFCLPILLWPLALTIS), 49–66 (TLMSVFLWAYPFGLALIA), and 79–101 (FARGLLGLSAVAFYGMLFYVAGG).

The protein localises to the cell membrane. This is an uncharacterized protein from Pasteurella multocida (strain Pm70).